A 122-amino-acid chain; its full sequence is uncharacterized protein (122 aa).

2 helical membrane passes run 9–29 (VATVDAIFAISSSTFLWSTWV) and 60–80 (LFSFTSVLTVSTFTFASCLIM).

It localises to the cytoplasm. The protein localises to the membrane. This is an uncharacterized protein from Schizosaccharomyces pombe (strain 972 / ATCC 24843) (Fission yeast).